The chain runs to 1357 residues: DNA-directed RNA polymerase subunit beta (1357 aa).

This sequence belongs to the RNA polymerase beta chain family. As to quaternary structure, the RNAP catalytic core consists of 2 alpha, 1 beta, 1 beta' and 1 omega subunit. When a sigma factor is associated with the core the holoenzyme is formed, which can initiate transcription.

It carries out the reaction RNA(n) + a ribonucleoside 5'-triphosphate = RNA(n+1) + diphosphate. DNA-dependent RNA polymerase catalyzes the transcription of DNA into RNA using the four ribonucleoside triphosphates as substrates. The chain is DNA-directed RNA polymerase subunit beta from Ectopseudomonas mendocina (strain ymp) (Pseudomonas mendocina).